The chain runs to 8081 residues: MASRRQKQFDRKYSSYRKFTATEDVNYSTHSSRSSYRSESLTSRTDGRGRSTSSEIIAGSESRSYPVYIAIQDYTPDKEDVEAIPLEQGQIVEVLDKKNSVRWLVRTKARPPRSGWVPGSYFETPTEFYKQRRRTREIENVSLSDEQAALVKRDQVYHELLRSEEEFVSSLRTCVDDYIKVLDDPEVPEAVKKNREELTLNIPELYNFHANVMLKGLNYYSDDPGKVGQTFVRLEKDFESHVEFYKQYADTLKLLEEPEIKRFFEGLSAKNDAGASSFVDHVKEIADRMVQYQNYFKEFVKYSARAHGSSKSIQKALELVTTIPQRVHDLEFTNNLKQHPGDTGKLGRIIRHDAFQVWEGDEPPKLRYVFLFRNKIMFTEQDASTSPPSYTHYSSIRLDKYNIRQHTTDEDTIVLQPQEPGLPSFRIKPKDFETSEYVRKAWLRDIAEEQEKYAAERDAISMTATSEMTASSVDFDMNASDQQSEFSEWSGSRKSSLFPGPEEGGPPRKKVKSPPVISPTGSSTSIYSGGSSSIDWTTTGTTLEMQGTRVTRTQYGFRTLQESSAKMCLKVTGYPLPDITWYKDDVQLHEDERHTFYSDEDGFFAMTIDPVQVTDTGRYTCMATNEYGQASTSAFFRVLKVEKEAAPPAFVTKLRDKECKEGDVIDFECEVEGWPEPELVWLVDDQPLRPSHDFRLQYDGQTAKLEIRDAQPDDTGVYTVKIQNEFGSIESKAELFVQADPDKNHVAPEFQATIEYVECDEGEEVRFKSVITGDPNPEIIWFINGKPLSESEKVKFISEDGICILTIKDVTRHFDGMVTCQGSNRLGSASCDGRLKVRVPPAPPTFNKPLEDKTVQEKSTVVFEVDVSGWPEPTLTFTLCGKELKNGEEGVEIVGHDGFYRISIPNTSMDKHDGEIVAKAQNEHGTAESRARLTVEQEEEESRSAPTFLKDIEDQTVKTGEFAVFETTVRGNPNPEVTWFINGHKMDQGSPGVKIEAHNHDHKLTIDSAQYAGTVLCRAENAVGRFETKARLVVLAPEKQKKPPKFVEILVDKTETVDNTVVFEVRVEGEPKPTVTWYLKGEELKQSDRVEIREFDGSIKISIKNIKIEDAGEIRAVATNSEGSDETKAKLTVQKKPFAPEFDLRPVSLTVEKGSEAVFSAHAFGIPLPTYEWSVNGRKVRDGQEGARVTRDESTVDGASILTIDTATYYSEVNHLTISVVAENTLGAEETGAQLTIEPKKESVVVEKQDLSSSEVQKEIAQQVKEASPEATTTITMETSLTSTKTTTMSTTEVTSTVGGVTVETKESESESATTVIGGGSGGVTEGSISVSKIEVVSKTDSQTDVREGTPKRRVSFAEEELPKEVIDSDRKKKKSPSPDKKEKSPEKTEEKPASPTKKTGEEVKSPKEKSPASPTKKEKSPAAEEVKSPTKKEKSPSSPTKKEKSPSSPTKKTGDEVKEKSPPKSPTKKEKSPEKPEDVKSPVKKEKSPDATNIVEVSSETTIEKTETTMTTEMTHESEESRTSVKKEKTPEKVDEKPKSPTKKDKSPEKSITEEIKSPVKKEKSPEKVEEKPASPTKKEKSPEKPASPTKKSENEVKSPTKKEKSPEKSVVEELKSPKEKSPEKADDKPKSPTKKEKSPEKSATEDVKSPTKKEKSPEKVEEKPTSPTKKESSPTKKTDDEVKSPTKKEKSPQTVEEKPASPTKKEKSPEKSVVEEVKSPKEKSPEKAEEKPKSPTKKEKSPEKSAAEEVKSPTKKEKSPEKSAEEKPKSPTKKESSPVKMADDEVKSPTKKEKSPEKVEEKPASPTKKEKTPEKSAAEELKSPTKKEKSPSSPTKKTGDESKEKSPEKPEEKPKSPTPKKSPPGSPKKKKSKSPEAEKPPAPKLTRDLKLQTVNKTDLAHFEVVVEHATECKWFLDGKEITTAQGVTVSKDDQFEFRCSIDTTMFGSGTVSVVASNAAGSVETKTELKVLETPKETKKPEFTDKLRDMEVTKGDTVQMDVIALHSPLYKWYQNGNLLEDGKNGVTIKNEENKSSLIIPNAQDSGKITVEASNEVGSSESSAQLTVNPPSTTPIVVDGPKSVTIKETETAEFKATISGFPAPTVKWTINEKIVEESRTITTIKTEDVYTLKISNAKIEQTGTVKVTAQNSAGQDSKQADLKVEPNVKAPKFKSQLTDKVADEGEPLRWNLELDGPSPGTEVSWLLNGQPLTKSDTVQVVDHGDGTYHVTIAEAKPEMSGTLTAKAKNAAGECETSAKVTVNGGNKKPEFVQAPQNHETTLEESVKFSAIVTGKPMPNVTWYLNNKKLIQSEEVKVKYVHETGKTSIRIQKPLMEHNGTIRVEAENVSGKVQATAQLKVDKKTEVPKFTTNMDDRQVKEGEDVKFTANVEGYPEPSVAWTLNGEPVSKHPNITVTDKDGEHTIEISAVTPEQAGELSCEATNPVGSKKRDVQLAVKKVGDAPTFAKNLEDRLITEGELTLMDAKLNIVKPKPKITWLKDGVEITSDGHYKIVEEEDGSLKLSILQTKLEDKGRITIKAESEFGVAECSASLGVVKGRPMAKPAFQSDIAPINLTEGDTLECKLLITGDPTPFVKWYIGTQLVCATEDTEISNANGVYTMKIHGVTADMTGKIKCVAYNKAGEVSTEGPLKVVAPIPVEFETSLCDATCREGDTLKLRAVLLGEPEPVVSWYVNGKKLEESQNIKIHSEKGTYTVTIKDITCDYSGQVVCEAINEYGKATSEATLLVLPRGEPPDFLEWLSNVRARTGTKVVHKVVFTGDPKPSLTWYINNKEILNSDLYTIVTDDKTSTLTINSFNPDVHVGEIICKAENDAGEVSCTANMITYTSDMFSESESEAQAEEFVGDDLTEDESLREEMHRTPTPVMAPKFITKIKDTKAKKGHSAVFECVVPDTKGVCCKWLKDGKEIELIARIRVQTRTGPEGHITQELVLDNVTPEDAGKYTCIVENTAGKDTCEATLTVIESLEKKSEKKAPEFIVALQDKTTKTSEKVVLECKVIGEPKPKVSWLHDNKTITQESITVESVEGVERVTITSSELSHQGKYTCIAENTEGTSKTEAFLTVQGEAPVFTKELQNKELSIGEKLVLSCSVKGSPQPHVDFYSFSETTKVETKITSSSRIAIEHDQTNTHWRMVISQITKEDIVSYKAIATNSIGTATSTSKITTKVEAPVFEQGLKKTSVKEKEEIKMEVKVGGSAPDVEWFKDDKPVSEDGNHEMKKNPETGVFTLVVKQAATTDAGKYTAKASNPAGTAESSAEAEVTQSLEKPTFVRELVTTEVKINETATLSVTVKGVPDPSVEWLKDGQPVQTDSSHVIAKVEGSGSYSITIKDARLEDSGKYACRATNPAGEAKTEANFAVVKNLVPPEFVEKLSPLEVKEKESTTLSVKVVGTPEPSVEWFKDDTPISIDNVHVIQKQTAVGSFSLTINDARQGDVGIYSCRARNEAGEALTTANFGIIRDSIPPEFTQKLRPLEVREQETLDLKVTVIGTPVPNVEWFKDDKPINIDNSHIFAKDEGSGHHTLTIKQARGEDVGVYTCKATNEAGEAKTTANMAVQEEIEAPLFVQGLKPYEVEQGKPAELVVRVEGKPEPEVKWFKDGVPIAIDNQHVIEKKGENGSHTLVIKDTNNADFGKYTCQATNKAGKDETVGELKIPKYSFEKQTAEEVKPLFIEPLKETFAVEGDTVVLECKVNKESHPQIKFFKNDQPVEIGQHMQLEVLEDGNIKLTIQNAKKEDVGAYRCEAVNVAGKANTNADLKIQFAAKVEEHVTDESGQLEEIGQFETVGDTASSKTDTGRGAPEFVELLRSCTVTEKQQAILKCKVKGEPRPKIKWTKEGKEVEMSARVRAEHKDDGTLTLTFDNVTQADAGEYRCEAENEYGSAWTEGPIIVTLEGAPKIDGEAPDFLQPVKPAVVTVGETAVLEGKISGKPKPSVKWYKNGEELKPSDRVKIENLDDGTQRLTVTNAKLDDMDEYRCEASNEFGDVWSDVTLTVKEPAQVAPGFFKELSAIQVKETETAKFECKVSGTKPDVKWFKDGTPLKEDKRVHFESTDDGTQRLVIEDSKTDDQGNYRIEVSNDAGVANSKVPLTVVPSETLKIKKGLTDVNVTQGTKILLSVEVEGKPKTVKWYKGTETVTSSQTTKIVQVTESEYKLEIESAEMSDTGAYRVVLSTDSFSVESSATVTVTKAAEKISLPSFKKGLADQSVPKGTPLVLEVEIEGKPKDVKWYKNGDEIKDGKVEDLGNGKYRLTIPDFQEKDVGEYSVTAANEAGEIESKAKVNVSAKPEIVSGLVPTTVKQGETATFNVKVKGPVKGVKWYKNGKEIPDAKTKDNGDGSYSLEIPNAQVEDAADYKVVVSNDAGDADSSAALTVKLADDGKDKVKPEIVSGLIPTTVKQGETATFNVKVKGPVKQVKWYKNGKEIPNAKAKDNGDGSYSLEIPNAQLDDTADYKVVVSNDAGDADSSAALTVKLPGIAIVKGLEDAEVPKGKKAVLQVETNKKPKEIKWYKNGKEITPSDKAQPGSDGDNKPQLVIPDAGDDDAAEYKVVLTDEDGNTADSSCALTVKLPAKEPKIIKGLEDQVVSIGSPIKLEIETSGSPKTVKWYKNGKELPGAAAKTIKIQKIDDNKYVLEIPSSVVEDTGDYKVEVANEAGSANSSGKITVEPKITFLKPLKDQSITEGENAEFSVETNTKPRIVKWYKNGQEIKPNSRFIIEQKTDTKYQLVIKNAVRDDADTYKIVLENTAGEAESSAQLTVKKAKAGLCKIVKGLEDQVVAKGAKMVFEVKIQGEPEDVRWLRDANVISAGANAIIEKIDDTTYRLIIPSADLKDAGEYTVEVINESGKAKSDAKGEVDEKPEIVRGLENIEIPEGDDDVFKVEVSAPVRQVKWYKNDQEIKPNSHLEAKKIGPKKYELAINRAQLDDGADYKVVLSNAAGDCDSSAALTVVKPNVLKIVDGLKDVDVEEPQPVELKVKVEGIPKVIKWYKNGQELKPDADGFKFEEKPESGEFSLTIPSSKKSDGGAYRVVLGNDKGEVYSGSVVHVKSAKSSEPTSGANFLSPLKDTEVEEGDMLTLQCTIAGEPFPEVIWEKDGVVLQKDDRITMRVALDGTATLRIRSAKKSDIGQYRVTAKNEAGSATSDCKVTVTEQGEQPSKPKFVIPLKTGAALPGDKKEFNVKVRGLPKPTLQWFLNGIPIKFDDRITLDDMADGNYCLTIRDVREEDFGTLKCIAKNENGTDETVCEFQQGAGHDDGSRDDLRYPPRFNVPLWDRRIPVGDPMFIECHVDANPTAEVEWFKDGKKIEHTAHTEIRNTVDGACRIKIIPFEESDIGVYMCVAVNELGQAETQATYQVEILEHVEEEKRREYAPKINPPLEDKTVNGGQPIRLSCKVDAIPRASVVWYKDGLPLRADSRTSIQYEEDGTATLAINDSTEEDIGAYRCVATNAHGTINTSCSVNVKVPKQEVKKEGEEPFFTKGLVDLWADRGDSFTLKCAVTGDPFPEIKWYRNGQLLRNGPRTVIETSPDGSCSLTVNESTMSDEGIYRCEAENAHGKAKTQATAHVQMALGKTEKPKMDEGKPPKFILELSDMSVSLGNVIDLECKVTGLPNPSVKWSKDGGPLIEDSRFEWSNEASKGVYQLRIKNATVHDEGTYRCVATNENGSATTKSFVRMDDGLGSGVVTASQPPRFTLKMGDVRTTEGQPLKLECKVDASPLPEMVWYKDGAIVTPSDRIQISLSPDGVATLLIPSCVYDDDGIYRVIATNPSGTAQDKGTATVKKLPRDSGARRSADRDVFDANKAPKLMEPLENIRIPEKQSFRLRCKFSGDPKPTIKWFKDGERVFPYGRLQLIESPDGVCELVVDSATRQDAGGYRCVAENTYGSARTSCDVNVIRGDRKPRDIDSSIREGKAPGFTTPLTIRRAKPGDSVTFECLPFGNPFPSIKWLKDGLELFSDEKIKMEAAADGTQRLILSDVTFLSEGYFRCVATNEHGTASTKAELVIEGDRTIGSRPLPEVNGEPEECKPRIRRGLYNMSIHEGNVVEMIVCATGIPTPTVKWYKDGQEIVGDGPDGKRVIFTDERGIHHLVIVNASPDDEGEYSLEATNKLGSAKTEGSLNIIRPRHIADADERGGMPFPPGFVRQLKNKHVFNHMPTIFDCLVVGHPAPEVEWFHNGKKIVPGGRIKIQSCGGGSHALIILDTTLEDAGEYVATAKNSHGSASSSAVLDVTVPFLDSIKFNGEIDVTPYLTEEYGFKKLNTASLPTPPDRGPFIKEVTGHYLTLSWIPTKRAPPRYPQVTYVIEIRELPEKQWSLLEYNIPEPVCKVRNLELGKSYQFRVRAENIYGISDPSPASPPSRLMAPPQPVFDRRTNKVIPLLDPYAEKALDMRYSEQYACAPWFSPGVVEKRYCAENDTLTIVLNVSGFPDPDIKWKFRGWDIDTSSPTSKCKVYTYGGSETTLAITGFSKENVGQYQCFAKNDYGDAQQNIMVDLATRPNFIQPLVNKTFSSAQPMRMDVRVDGEPFPELKWMKEWRPIVESSRIKFVQDGPYLCSLIINDPMWRDSGIYSCVAVNDAGQATTSCTVTVEAEGDYNDVELPRRRVTIESRRVRELYEISEKDEKLAAEGAPFRVKEKATGREFLAQLRPIDDALMRHVDIHNSLDHPGIVQMHRVLRDEKLALVVFDNANSTIDGLSSLAHPGVEIAEPKGVNRETCVRVFVRQLLLALKHMHDLRIAHLDLRPETILLQDDKLKLADFGQARRLLRGLITGEIKGSPEFVSPEIVRSYPLTLATDMWSTGVLTYVLLTGLSPFHGDNDNETLANVDSCQFDSSPLGNFSYDAGDFVKKLLTEIPVSRLTVDEALDHPWINDEKLKTEPLSADTLREFKYQHKWLERRVFVQQTPSEQILEAILGPATAQAQQNAPVAPEGRRPAEIYDYLRIQPKKPPPTVEYVPQPRKEHPPFIDEFGQLIDGDAFDRPEGTGFEGPHRQPPQIPPQPQRPNQAAHDSRRHEQQPQHQGQPQRIPVDQYGRPLVDPRYLNDPSHRPSSLDDAPFYVDKYGNPVHFDKYGRPMAPQNLEKRKLIPQDKGETPSHSKKEKTQHPVATPILASPGGDQQQQKIPMRMIRGERREIEEEIANRILSDISEEGSIAGSLASLEDFEIPKDFQVEASEPSTPTLTPEVTIRETIPKPTPSPTSPQKSPVPQPQGLLIPAKVTYSDSILAGLPAADKKVLEDAENDPSIPVGAPLFLEGLHGSDLTIDTTSASGLIKVTSPAINLSPNPKSPRRSTPGTKSPVVLSPRQEHSMEVLIATKRGKPGFLPPGELAEDIDDEDAFMDDRKKQVKPKDHDGENDFKDEKERLEKDKNRRTVNLDDLDKYRPSAFYKDDSDFGHPGYDIDATPWDSHYQIGPDTYLMAARGAAFNSRVRNYREELFGMGAPTVKQGFLGVRNRDITVRERRRYTDILRETTQGLEPKSHEQSTALLQKAPSATAIERIKADIEKVTPCATKKNDDGTFAPIFTARLRDVYLRKNQPAIFECAVSASPAPKVTWDFQGKILESNDRVTIEQDNNVARLILNHAAPYDLGEYVCTAINEYGTDKSSCRLISGETPSRPGRPEAELSSDTEIFIQWEAPEGPTYLEGITYRLEYRVAGPNDHGDPWITVSEKIDDESVIVKHLSPLGIYQFRVTAQNGFGLGLPSLSSRIVQTHGKGAPKLQIDVLKSEIRLNVVSMPQKSTNQLGGISEESEEDSEARTANEDMKSNLQLQTDDPTGRFQIGGLKFKGRFSVIRDAVDSTTEGHAHCAVKIRHPSSEAISEYESLRDGQHENVQRLIAAFNNSNFLYLLSERLYEDVFSRFVFNDYYTEEQVALTMRQVTSALHFLHFKGIAHLDVNPHNIMFQSKRSWVVKLVDFGRAQKVSGAVKPVDFDTKWASPEFHIPETPVTVQSDMWGMGVVTFCLLAGFHPFTSEYDREEEIKENVINVKCDPNLIPVNASQECLSFATWALKKSPVRRMRTDEALSHKFLSSDPSMVRRRESIKYSASRLRKLAAMIRQPTFSQPISEELESKYGK.

The tract at residues 24–57 (DVNYSTHSSRSSYRSESLTSRTDGRGRSTSSEII) is disordered. A compositionally biased stretch (low complexity) spans 28 to 54 (STHSSRSSYRSESLTSRTDGRGRSTSS). The SH3 domain occupies 63–127 (RSYPVYIAIQ…PGSYFETPTE (65 aa)). The region spanning 152–330 (KRDQVYHELL…TTIPQRVHDL (179 aa)) is the DH domain. One can recognise a PH domain in the interval 342 to 498 (DTGKLGRIIR…WSGSRKSSLF (157 aa)). A compositionally biased stretch (polar residues) spans 479 to 495 (ASDQQSEFSEWSGSRKS). Residues 479–531 (ASDQQSEFSEWSGSRKSSLFPGPEEGGPPRKKVKSPPVISPTGSSTSIYSGGS) are disordered. Positions 518–531 (SPTGSSTSIYSGGS) are enriched in low complexity. Ig-like C2-type domains follow at residues 547 to 633 (GTRV…ASTS), 648 to 736 (PAFV…AELF), 748 to 838 (PEFQ…LKVR), 946 to 1033 (PTFL…ARLV), 1044 to 1132 (PKFV…AKLT), and 1140 to 1227 (PEFD…NTLG). A disulfide bridge links C568 with C621. Low complexity-rich tracts occupy residues 1283–1303 (STKTTTMSTTEVTSTVGGVTV) and 1326–1335 (EGSISVSKIE). Residues 1283–1892 (STKTTTMSTT…PAPKLTRDLK (610 aa)) form a disordered region. Composition is skewed to basic and acidic residues over residues 1336-1351 (VVSKTDSQTDVREGTP), 1361-1446 (ELPK…KEKS), 1453-1490 (KTGDEVKEKSPPKSPTKKEKSPEKPEDVKSPVKKEKSP), 1515-1585 (MTHE…KSPE), 1592-1832 (KKSE…KEKS), and 1839-1857 (KTGDESKEKSPEKPEEKPK). RCSD domains lie at 1375 to 1475 (KSPS…KSPE), 1479 to 1585 (DVKS…KSPE), 1597 to 1695 (EVKS…KSPQ), and 1700 to 1799 (KPAS…KSPE). The span at 1858-1868 (SPTPKKSPPGS) shows a compositional bias: pro residues. Residues 1875–1892 (KSPEAEKPPAPKLTRDLK) show a composition bias toward basic and acidic residues. 41 consecutive Ig-like C2-type domains span residues 1982-2067 (PEFT…AQLT), 2071-2163 (PSTT…ADLK), 2171-2261 (PKFK…AKVT), 2269-2359 (PEFV…AQLK), 2367-2455 (PKFT…VQLA), 2463-2564 (PTFA…AKPA), 2563-2651 (PAFQ…GPLK), 2657-2746 (PVEF…ATLL), 2754-2858 (PDFL…SEAQ), 2887-2980 (PKFI…ATLT), 2994-3081 (PEFI…AFLT), 3087-3183 (PVFT…SKIT), 3189-3280 (PVFE…AEVT), 3286-3376 (PTFV…ANFA), 3384-3469 (PEFV…EALT), 3482-3572 (PEFT…ANMA), 3580-3667 (PLFV…ETVG), 3686-3777 (PLFI…LKIQ), 3817-3908 (PEFV…IIVT), 3920-4009 (PDFL…VTLT), 4018-4106 (PGFF…VPLT), 4109-4201 (PSET…ATVT), 4212-4297 (PSFK…AKVN), 4302-4387 (PEIV…AALT), 4400-4485 (PEIV…AALT), 4489-4580 (PGIA…CALT), 4588-4678 (PKII…GKIT), 4681-4771 (PKIT…AQLT), 4873-4961 (PEIV…AALT), 4965-5057 (PNVL…GSVV), 5067-5160 (PTSG…CKVT), 5171-5260 (PKFV…CEFQ), 5277-5366 (PRFN…ATYQ), 5383-5472 (PKIN…CSVN), 5487-5578 (PFFT…AHVQ), 5595-5685 (PKFI…SFVR), 5701-5790 (PRFT…GTAT), 5815-5904 (PKLM…CDVN), 5925-6014 (PGFT…AELV), 6038-6130 (PRIR…GSLN), and 6150-6239 (PGFV…AVLD). Cysteines 2582 and 2635 form a disulfide. 2 disulfide bridges follow: C2908/C2964 and C3015/C3065. Cystine bridges form between C3707–C3759 and C3838–C3890. The tract at residues 4525–4553 (KNGKEITPSDKAQPGSDGDNKPQLVIPDA) is disordered. 4 disulfide bridges follow: C5298–C5350, C5404–C5456, C5508–C5560, and C5616–C5669. Disulfide bonds link C5836-C5888 and C5946-C5998. Positions 6278–6374 (PDRGPFIKEV…SPPSRLMAPP (97 aa)) constitute a Fibronectin type-III 1 domain. 2 consecutive Ig-like C2-type domains span residues 6413–6502 (PGVV…IMVD) and 6507–6596 (PNFI…CTVT). The region spanning 6592–6878 (SCTVTVEAEG…VDEALDHPWI (287 aa)) is the Protein kinase 1 domain. Disordered regions lie at residues 6954–7130 (KKPP…QQKI), 7177–7217 (QVEA…PQPQ), 7284–7311 (PAINLSPNPKSPRRSTPGTKSPVVLSPR), 7324–7343 (RGKPGFLPPGELAEDIDDED), and 7348–7372 (DRKKQVKPKDHDGENDFKDEKERLE). Over residues 6999-7009 (RQPPQIPPQPQ) the composition is skewed to pro residues. The span at 7087–7110 (LEKRKLIPQDKGETPSHSKKEKTQ) shows a compositional bias: basic and acidic residues. Pro residues predominate over residues 7200–7215 (KPTPSPTSPQKSPVPQ). A compositionally biased stretch (polar residues) spans 7284 to 7302 (PAINLSPNPKSPRRSTPGT). An Ig-like C2-type 50 domain is found at 7528 to 7617 (PIFTARLRDV…TDKSSCRLIS (90 aa)). C7549 and C7600 form a disulfide bridge. In terms of domain architecture, Fibronectin type-III 2 spans 7623-7721 (RPGRPEAELS…SSRIVQTHGK (99 aa)). The interval 7746–7773 (STNQLGGISEESEEDSEARTANEDMKSN) is disordered. Residues 7762–7771 (EARTANEDMK) show a composition bias toward basic and acidic residues. Residues 7785-8035 (FQIGGLKFKG…TDEALSHKFL (251 aa)) enclose the Protein kinase 2 domain.

Belongs to the protein kinase superfamily. CAMK Ser/Thr protein kinase family. As to quaternary structure, may interact (via fibronectin type-III domain 1, Ig-like C2-type domain 48/49 and protein kinase domain 1 or C-terminus of the interkinase region) with lim-9 (via LIM zinc-binding domain). May interact (via fibronectin type-III domain 1, Ig-like C2-type domain 48/49 and kinase protein domain 1 or Ig-like C2-type domain 50, fibronectin type-III domain 2 and kinase protein domain 2) with scpl-1 isoforms a and b (via FCP1 homology domain); the interaction may act as a molecular bridge to bring two unc-89 molecules together or to stabilize a loop between the 2 kinase domains. May interact (via SH3 domain) with unc-15. May interact (via Ig-like C2-type domain 1-3) with cpna-1 (via VWFA domain). May interact (via Ig-like C2-type domain 2/3 and, Ig-like C2-type domain 50 and fibronectin type-III domain 2) with mel-26 (via MATH domain). May interact (via DH and PH domains) with rho-1, ced-10, mig-2 and cdc-42. As to expression, expressed in body-wall, pharyngeal muscles and a few muscle cells of the tail (at protein level). Expressed in gonadal myoepithelial sheath cells (at protein level). Isoform c: Expressed in body wall and vulval muscles but not in pharyngeal muscles. Isoform d: Specifically expressed in vulval, intestinal, anal depressor and anal sphincter muscles.

It is found in the cytoplasm. It localises to the myofibril. The protein localises to the sarcomere. The protein resides in the m line. Functionally, structural component of the muscle M line which is involved in assembly and organization of sarcomere myofilaments. The large isoform a, isoform b, isoform d and isoform f play an essential role in maintaining the organization of sarcomeres but not myofilament alignment during body wall muscle development whereas the small isoform c and isoform d appear to have a minor role. Isoform b and isoform f are required for the organization of unc-15/paramyosin into sarcomere thick filaments in body wall muscles. By binding mel-26, a substrate adapter of the cul-3 E3 ubiquitin-protein ligase complex, regulates the organization of myosin thick filaments, likely by preventing the degradation of microtubule severing protein mei-1. Acts as a guanine nucleotide exchange factor (GEF) for Rho GTPase rho-1 but not ced-10, mig-2 and cdc-42. The large isoforms regulate Ca(2+) signaling during muscle contraction by ensuring the correct localization of sarco-endoplamic reticulum Ca(2+) ATPase sca-1 and ryanodine receptor unc-68. By controlling the contraction and/or organization of pharyngeal muscles, plays a role in the formation of pharyngeal gland cell extension. This Caenorhabditis elegans protein is Muscle M-line assembly protein unc-89 (unc-89).